A 129-amino-acid polypeptide reads, in one-letter code: Small ribosomal subunit protein uS11 (129 aa).

The protein belongs to the universal ribosomal protein uS11 family. Part of the 30S ribosomal subunit. Interacts with proteins S7 and S18. Binds to IF-3.

Located on the platform of the 30S subunit, it bridges several disparate RNA helices of the 16S rRNA. Forms part of the Shine-Dalgarno cleft in the 70S ribosome. This is Small ribosomal subunit protein uS11 from Marinobacter nauticus (strain ATCC 700491 / DSM 11845 / VT8) (Marinobacter aquaeolei).